The following is a 96-amino-acid chain: Cell division topological specificity factor (96 aa).

Belongs to the MinE family.

Prevents the cell division inhibition by proteins MinC and MinD at internal division sites while permitting inhibition at polar sites. This ensures cell division at the proper site by restricting the formation of a division septum at the midpoint of the long axis of the cell. This chain is Cell division topological specificity factor, found in Nitrosococcus oceani (strain ATCC 19707 / BCRC 17464 / JCM 30415 / NCIMB 11848 / C-107).